The sequence spans 285 residues: Energy-coupling factor transporter ATP-binding protein EcfA3 (285 aa).

Positions 6-242 constitute an ABC transporter domain; the sequence is LKVEELNYNY…KEVIRKVNLR (237 aa). 39 to 46 provides a ligand contact to ATP; it reads GGNGVGKS.

It belongs to the ABC transporter superfamily. Energy-coupling factor EcfA family. In terms of assembly, forms a stable energy-coupling factor (ECF) transporter complex composed of 2 membrane-embedded substrate-binding proteins (S component), 2 ATP-binding proteins (A component) and 2 transmembrane proteins (T component).

The protein localises to the cell membrane. Functionally, ATP-binding (A) component of a common energy-coupling factor (ECF) ABC-transporter complex. Unlike classic ABC transporters this ECF transporter provides the energy necessary to transport a number of different substrates. The sequence is that of Energy-coupling factor transporter ATP-binding protein EcfA3 from Clostridium perfringens (strain ATCC 13124 / DSM 756 / JCM 1290 / NCIMB 6125 / NCTC 8237 / Type A).